The following is a 408-amino-acid chain: MIVRHLSLGDFRNYTRADVALLPGATLFVGSNGQGKTNLVEALGFLSTLGSHRVSTDQALVRQGAESAVIRALLQHAGRELRVEVQINRSAANRAQVNGTATKTRELPRYFSSVLFAPEDLALVRGDPSGRRRLLDQLLVLRTPRLAGVLSDYDRALKQRNTLLKSARARGMKADQLSTLDIWDERLVAIGSQIIAARGALVESLQPELARAYLAVAGSDHGPSARPELSILADDPGEDDVADETGARDGGRFTRTEDVVPVFTAAIARMRPRELERGLTLVGPHRDDVLFRLNGLPAKGYASHGESWSFALAIKLASAELLRRDSQTGDPVLILDDVFAELDQARRGRLAEAVTGFEQVLITAAVFEDVPEHLAANAVHIRAGAIVESPTPASASEPASPGEDGGAA.

Gly-30–Thr-37 lines the ATP pocket. Disordered regions lie at residues Asp-220–Arg-252 and Ser-389–Ala-408. The segment covering Ser-389 to Gly-402 has biased composition (low complexity).

This sequence belongs to the RecF family.

It is found in the cytoplasm. Functionally, the RecF protein is involved in DNA metabolism; it is required for DNA replication and normal SOS inducibility. RecF binds preferentially to single-stranded, linear DNA. It also seems to bind ATP. This Clavibacter sepedonicus (Clavibacter michiganensis subsp. sepedonicus) protein is DNA replication and repair protein RecF.